Reading from the N-terminus, the 554-residue chain is Glutamine--tRNA ligase (554 aa).

The 'HIGH' region motif lies at 34–44 (PEPNGYLHIGH). ATP-binding positions include 35 to 37 (EPN) and 41 to 47 (HIGHAKS). 2 residues coordinate L-glutamine: Asp67 and Tyr212. Residues Thr231, 261-262 (RL), and 269-271 (MSK) contribute to the ATP site. The 'KMSKS' region signature appears at 268–272 (VMSKR). An interaction with tRNA region spans residues 317 to 324 (TKQDNTIE).

The protein belongs to the class-I aminoacyl-tRNA synthetase family. In terms of assembly, monomer.

It localises to the cytoplasm. It catalyses the reaction tRNA(Gln) + L-glutamine + ATP = L-glutaminyl-tRNA(Gln) + AMP + diphosphate. In Escherichia coli O127:H6 (strain E2348/69 / EPEC), this protein is Glutamine--tRNA ligase.